Consider the following 272-residue polypeptide: Polar tube protein 2 (272 aa).

The signal sequence occupies residues 1–21 (MLLLFTVVTLVSAAQVAPVTP). Asn-134 is a glycosylation site (N-linked (GlcNAc...) asparagine). The interval 231 to 272 (RAIQKKEVKESSKDGEKSSTQNGEGTTDDEDGQQSPDGNGPE) is disordered. Residues 234 to 247 (QKKEVKESSKDGEK) show a composition bias toward basic and acidic residues. Residues 263-272 (QQSPDGNGPE) are compositionally biased toward polar residues.

It is found in the spore polar tube. Its function is as follows. Involved in formation of a polar tube through which the infectious agent is passed on to the host cell. The chain is Polar tube protein 2 (PTP2) from Encephalitozoon hellem (Microsporidian parasite).